Reading from the N-terminus, the 460-residue chain is Bifunctional protein GlmU (460 aa).

Positions 1–229 (MTNYAIILAA…FNESLGVNDR (229 aa)) are pyrophosphorylase. Residues 8-11 (LAAG), Lys22, Gln72, and 77-78 (GT) contribute to the UDP-N-acetyl-alpha-D-glucosamine site. A Mg(2+)-binding site is contributed by Asp102. Gly139, Glu154, Asn169, and Asn227 together coordinate UDP-N-acetyl-alpha-D-glucosamine. Asn227 lines the Mg(2+) pocket. Residues 230 to 250 (VALAIAETVMRQRITQKHMVN) are linker. The segment at 251 to 460 (GVTFQNPETV…RLAHHPSRSK (210 aa)) is N-acetyltransferase. UDP-N-acetyl-alpha-D-glucosamine-binding residues include Arg332 and Lys350. The Proton acceptor role is filled by His362. Tyr365 and Asn376 together coordinate UDP-N-acetyl-alpha-D-glucosamine. Acetyl-CoA contacts are provided by residues Ala379, 385–386 (NY), Ser404, Ala422, and Arg439.

The protein in the N-terminal section; belongs to the N-acetylglucosamine-1-phosphate uridyltransferase family. In the C-terminal section; belongs to the transferase hexapeptide repeat family. In terms of assembly, homotrimer. Mg(2+) serves as cofactor.

The protein resides in the cytoplasm. The enzyme catalyses alpha-D-glucosamine 1-phosphate + acetyl-CoA = N-acetyl-alpha-D-glucosamine 1-phosphate + CoA + H(+). It catalyses the reaction N-acetyl-alpha-D-glucosamine 1-phosphate + UTP + H(+) = UDP-N-acetyl-alpha-D-glucosamine + diphosphate. It participates in nucleotide-sugar biosynthesis; UDP-N-acetyl-alpha-D-glucosamine biosynthesis; N-acetyl-alpha-D-glucosamine 1-phosphate from alpha-D-glucosamine 6-phosphate (route II): step 2/2. The protein operates within nucleotide-sugar biosynthesis; UDP-N-acetyl-alpha-D-glucosamine biosynthesis; UDP-N-acetyl-alpha-D-glucosamine from N-acetyl-alpha-D-glucosamine 1-phosphate: step 1/1. It functions in the pathway bacterial outer membrane biogenesis; LPS lipid A biosynthesis. Functionally, catalyzes the last two sequential reactions in the de novo biosynthetic pathway for UDP-N-acetylglucosamine (UDP-GlcNAc). The C-terminal domain catalyzes the transfer of acetyl group from acetyl coenzyme A to glucosamine-1-phosphate (GlcN-1-P) to produce N-acetylglucosamine-1-phosphate (GlcNAc-1-P), which is converted into UDP-GlcNAc by the transfer of uridine 5-monophosphate (from uridine 5-triphosphate), a reaction catalyzed by the N-terminal domain. The chain is Bifunctional protein GlmU from Streptococcus pyogenes serotype M1.